The sequence spans 459 residues: Zinc finger protein 213 (459 aa).

The region spanning Arg-45–Gln-126 is the SCAN box domain. Residues Val-128–Glu-188 form a disordered region. The 91-residue stretch at Val-202 to Pro-292 folds into the KRAB domain. C2H2-type zinc fingers lie at residues His-317 to His-339, His-345 to His-367, Phe-373 to His-395, Phe-401 to His-423, and Phe-429 to His-451.

This sequence belongs to the krueppel C2H2-type zinc-finger protein family. As to expression, widely expressed with highest levels in testis.

The protein localises to the nucleus. May be involved in transcriptional regulation. The chain is Zinc finger protein 213 (ZNF213) from Homo sapiens (Human).